The following is a 124-amino-acid chain: Large ribosomal subunit protein bL36m (124 aa).

Belongs to the bacterial ribosomal protein bL36 family. Component of the mitochondrial large ribosomal subunit (mt-LSU). Mature N.crassa 74S mitochondrial ribosomes consist of a small (37S) and a large (54S) subunit. The 37S small subunit contains a 16S ribosomal RNA (16S mt-rRNA) and 32 different proteins. The 54S large subunit contains a 23S rRNA (23S mt-rRNA) and 42 different proteins. bL36m has a zinc binding site.

It is found in the mitochondrion. Its function is as follows. Component of the mitochondrial ribosome (mitoribosome), a dedicated translation machinery responsible for the synthesis of mitochondrial genome-encoded proteins, including at least some of the essential transmembrane subunits of the mitochondrial respiratory chain. The mitoribosomes are attached to the mitochondrial inner membrane and translation products are cotranslationally integrated into the membrane. The sequence is that of Large ribosomal subunit protein bL36m (rtc6) from Neurospora crassa (strain ATCC 24698 / 74-OR23-1A / CBS 708.71 / DSM 1257 / FGSC 987).